The following is a 150-amino-acid chain: Peptide deformylase (150 aa).

Positions 88 and 130 each coordinate Fe cation. Residue glutamate 131 is part of the active site. Histidine 134 contributes to the Fe cation binding site.

It belongs to the polypeptide deformylase family. Fe(2+) serves as cofactor.

The enzyme catalyses N-terminal N-formyl-L-methionyl-[peptide] + H2O = N-terminal L-methionyl-[peptide] + formate. Its function is as follows. Removes the formyl group from the N-terminal Met of newly synthesized proteins. Requires at least a dipeptide for an efficient rate of reaction. N-terminal L-methionine is a prerequisite for activity but the enzyme has broad specificity at other positions. This is Peptide deformylase from Desulfitobacterium hafniense (strain DSM 10664 / DCB-2).